Reading from the N-terminus, the 454-residue chain is Phosphoglucosamine mutase (454 aa).

Ser-101 acts as the Phosphoserine intermediate in catalysis. Mg(2+) contacts are provided by Ser-101, Asp-243, Asp-245, and Asp-247. Residue Ser-101 is modified to Phosphoserine.

The protein belongs to the phosphohexose mutase family. Mg(2+) is required as a cofactor. Post-translationally, activated by phosphorylation.

It carries out the reaction alpha-D-glucosamine 1-phosphate = D-glucosamine 6-phosphate. In terms of biological role, catalyzes the conversion of glucosamine-6-phosphate to glucosamine-1-phosphate. This chain is Phosphoglucosamine mutase, found in Citrifermentans bemidjiense (strain ATCC BAA-1014 / DSM 16622 / JCM 12645 / Bem) (Geobacter bemidjiensis).